The chain runs to 135 residues: Large ribosomal subunit protein uL16c (135 aa).

Residues 1–17 show a composition bias toward basic residues; sequence MLSPKRTKFRKQHRNRM. The tract at residues 1–22 is disordered; that stretch reads MLSPKRTKFRKQHRNRMNGKAS.

It belongs to the universal ribosomal protein uL16 family. Part of the 50S ribosomal subunit.

Its subcellular location is the plastid. The protein resides in the chloroplast. The protein is Large ribosomal subunit protein uL16c of Gracilaria tenuistipitata (Red alga).